An 86-amino-acid chain; its full sequence is MEILKVSAKSSPNSVAGALAGVLRERGAAEIQAIGAGALNQAVKAVAIARGFVAPSGVDLICIPAFTDIQIDGEERTAIKLIVEPR.

Its function is as follows. Interferes with sporulation at an early stage. Seems to play a positive role in allowing cells to progress beyond stage V of sporulation. The sequence is that of Stage V sporulation protein S from Bacillus subtilis (strain 168).